A 461-amino-acid chain; its full sequence is Cysteine--tRNA ligase (461 aa).

A Zn(2+)-binding site is contributed by C28. Positions 30-40 (ITIYDLCHIGH) match the 'HIGH' region motif. Residues C209, H234, and E238 each coordinate Zn(2+). Positions 266-270 (KMSKS) match the 'KMSKS' region motif. Position 269 (K269) interacts with ATP.

The protein belongs to the class-I aminoacyl-tRNA synthetase family. In terms of assembly, monomer. Zn(2+) serves as cofactor.

It is found in the cytoplasm. The catalysed reaction is tRNA(Cys) + L-cysteine + ATP = L-cysteinyl-tRNA(Cys) + AMP + diphosphate. The polypeptide is Cysteine--tRNA ligase (Yersinia pseudotuberculosis serotype O:3 (strain YPIII)).